Consider the following 233-residue polypeptide: Pre-hexon-linking protein VIII (233 aa).

The residue at position 64 (Thr-64) is a Phosphothreonine; by host. The propeptide occupies 112-163 (ARHVRFRDRPSPYSSGSIKRLIIRGRGIQLNDEVVSSSTGPRPDGVFQLGGA). A Phosphoserine; by host modification is found at Ser-180.

Belongs to the adenoviridae hexon-linking protein family. Interacts with the peripentonal hexons as well as the hexons in the facets. Part of a complex composed of the core-capsid bridging protein, the endosome lysis protein VI and the hexon-linking protein VIII; these interactions bridge the virus core to the capsid. Post-translationally, cleaved by the viral protease during virion maturation. May cause the middle segment to be shed from the capsid.

Its subcellular location is the virion. It localises to the host nucleus. Structural component of the virion that acts as a cement protein on the capsid interior and which glue the peripentonal hexons and group-of-nine hexons together. This Homo sapiens (Human) protein is Pre-hexon-linking protein VIII.